The primary structure comprises 181 residues: Large ribosomal subunit protein uL5 (181 aa).

This sequence belongs to the universal ribosomal protein uL5 family. As to quaternary structure, part of the 50S ribosomal subunit; part of the 5S rRNA/L5/L18/L25 subcomplex. Contacts the 5S rRNA and the P site tRNA. Forms a bridge to the 30S subunit in the 70S ribosome.

In terms of biological role, this is one of the proteins that bind and probably mediate the attachment of the 5S RNA into the large ribosomal subunit, where it forms part of the central protuberance. In the 70S ribosome it contacts protein S13 of the 30S subunit (bridge B1b), connecting the 2 subunits; this bridge is implicated in subunit movement. Contacts the P site tRNA; the 5S rRNA and some of its associated proteins might help stabilize positioning of ribosome-bound tRNAs. The polypeptide is Large ribosomal subunit protein uL5 (Mycoplasmopsis pulmonis (strain UAB CTIP) (Mycoplasma pulmonis)).